A 748-amino-acid chain; its full sequence is LPS-assembly protein LptD (748 aa).

Positions 1 to 19 (MSKTWGILMLSVLSAPSLA) are cleaved as a signal peptide.

This sequence belongs to the LptD family. As to quaternary structure, component of the lipopolysaccharide transport and assembly complex. Interacts with LptE and LptA.

Its subcellular location is the cell outer membrane. Functionally, together with LptE, is involved in the assembly of lipopolysaccharide (LPS) at the surface of the outer membrane. This chain is LPS-assembly protein LptD, found in Pseudoalteromonas translucida (strain TAC 125).